Consider the following 239-residue polypeptide: Guanylate kinase (239 aa).

The Guanylate kinase-like domain maps to 55-235 (GRIFVITGPS…TLAELQAILL (181 aa)). 62–69 (GPSGVGKS) is an ATP binding site.

The protein belongs to the guanylate kinase family.

It is found in the cytoplasm. The enzyme catalyses GMP + ATP = GDP + ADP. Functionally, essential for recycling GMP and indirectly, cGMP. The sequence is that of Guanylate kinase (gmk) from Mycoplasma pneumoniae (strain ATCC 29342 / M129 / Subtype 1) (Mycoplasmoides pneumoniae).